The following is a 109-amino-acid chain: Large ribosomal subunit protein uL22 (109 aa).

Belongs to the universal ribosomal protein uL22 family. Part of the 50S ribosomal subunit.

Its function is as follows. This protein binds specifically to 23S rRNA; its binding is stimulated by other ribosomal proteins, e.g. L4, L17, and L20. It is important during the early stages of 50S assembly. It makes multiple contacts with different domains of the 23S rRNA in the assembled 50S subunit and ribosome. In terms of biological role, the globular domain of the protein is located near the polypeptide exit tunnel on the outside of the subunit, while an extended beta-hairpin is found that lines the wall of the exit tunnel in the center of the 70S ribosome. The sequence is that of Large ribosomal subunit protein uL22 from Thiobacillus denitrificans (strain ATCC 25259 / T1).